Here is a 317-residue protein sequence, read N- to C-terminus: Transaldolase (317 aa).

The active-site Schiff-base intermediate with substrate is Lys-126.

Belongs to the transaldolase family. Type 1 subfamily. In terms of assembly, homodimer.

It localises to the cytoplasm. The enzyme catalyses D-sedoheptulose 7-phosphate + D-glyceraldehyde 3-phosphate = D-erythrose 4-phosphate + beta-D-fructose 6-phosphate. It participates in carbohydrate degradation; pentose phosphate pathway; D-glyceraldehyde 3-phosphate and beta-D-fructose 6-phosphate from D-ribose 5-phosphate and D-xylulose 5-phosphate (non-oxidative stage): step 2/3. Functionally, transaldolase is important for the balance of metabolites in the pentose-phosphate pathway. The sequence is that of Transaldolase from Burkholderia pseudomallei (strain 1710b).